Reading from the N-terminus, the 626-residue chain is Forkhead box protein O1 (626 aa).

A compositionally biased stretch (pro residues) spans 1-11 (MAEAPLPPPPG). Disordered regions lie at residues 1–57 (MAEA…PAAG), 90–142 (DIRQ…SRRN), 218–319 (SSWW…MPEQ), and 484–519 (PTYG…MTHN). Low complexity-rich tracts occupy residues 37-48 (NPSSSANSSPAP) and 101-133 (QHPQ…AQQP). The segment at residues 144-238 (WGNLSYADLI…KNGKSPRRRA (95 aa)) is a DNA-binding region (fork-head). Residues 248–259 (AKSRGRAAKKKA) are compositionally biased toward basic residues. A compositionally biased stretch (low complexity) spans 262–277 (QSSQDGSSDSPGSQFS). Composition is skewed to polar residues over residues 298–310 (RPRT…TISG) and 484–494 (PTYGSQPTHNK).

In terms of processing, phosphorylated by AKT1; insulin-induced. IGF1 rapidly induces phosphorylation of Thr-28, Ser-240 and Ser-303. Phosphorylation of Ser-240 decreases DNA-binding activity and promotes the phosphorylation of Thr-28, and Ser-303, which leads to nuclear exclusion and loss of function. Phosphorylation of Ser-313 is independent of IGF1 and leads to reduced function.

Its subcellular location is the cytoplasm. The protein resides in the nucleus. Transcription factor that regulates metabolic homeostasis in response to oxidative stress. Binds to the consensus sequence 5'-TT[G/A]TTTTG-3' and the related Daf-16 family binding element (DBE) with consensus sequence 5'-TT[G/A]TTTAC-3'. Main regulator of redox balance and osteoblast numbers and controls bone mass. Orchestrates the endocrine function of the skeleton in regulating glucose metabolism. Also acts as a key regulator of chondrogenic commitment of skeletal progenitor cells in response to lipid availability: when lipids levels are low, translocates to the nucleus and promotes expression of sox9, which induces chondrogenic commitment and suppresses fatty acid oxidation. Acts synergistically with atf4 to suppress osteocalcin/bglap activity, increasing glucose levels and triggering glucose intolerance and insulin insensitivity. Also suppresses the transcriptional activity of runx2, an upstream activator of osteocalcin/bglap. May act as a positive regulator of apoptosis in cardiac smooth muscle cells as a result of its transcriptional activation of pro-apoptotic genes. The chain is Forkhead box protein O1 from Xenopus tropicalis (Western clawed frog).